The primary structure comprises 376 residues: Phosphoserine aminotransferase (376 aa).

Position 46 (R46) interacts with L-glutamate. Residues 80 to 81, F104, T150, D172, and Q195 each bind pyridoxal 5'-phosphate; that span reads AT. K196 bears the N6-(pyridoxal phosphate)lysine mark. Pyridoxal 5'-phosphate is bound at residue 247 to 248; that stretch reads NT.

This sequence belongs to the class-V pyridoxal-phosphate-dependent aminotransferase family. SerC subfamily. Homodimer. Pyridoxal 5'-phosphate is required as a cofactor.

It localises to the cytoplasm. The enzyme catalyses O-phospho-L-serine + 2-oxoglutarate = 3-phosphooxypyruvate + L-glutamate. It carries out the reaction 4-(phosphooxy)-L-threonine + 2-oxoglutarate = (R)-3-hydroxy-2-oxo-4-phosphooxybutanoate + L-glutamate. It participates in amino-acid biosynthesis; L-serine biosynthesis; L-serine from 3-phospho-D-glycerate: step 2/3. The protein operates within cofactor biosynthesis; pyridoxine 5'-phosphate biosynthesis; pyridoxine 5'-phosphate from D-erythrose 4-phosphate: step 3/5. Catalyzes the reversible conversion of 3-phosphohydroxypyruvate to phosphoserine and of 3-hydroxy-2-oxo-4-phosphonooxybutanoate to phosphohydroxythreonine. The sequence is that of Phosphoserine aminotransferase from Corynebacterium glutamicum (strain R).